The sequence spans 304 residues: Ornithine carbamoyltransferase (304 aa).

Residues 53-56 (STRT), Gln80, Arg104, and 131-134 (HPCQ) contribute to the carbamoyl phosphate site. L-ornithine-binding positions include Asn162, Asp222, and 226 to 227 (SM). Residues 261 to 262 (CL) and Arg289 contribute to the carbamoyl phosphate site.

It belongs to the aspartate/ornithine carbamoyltransferase superfamily. OTCase family.

It localises to the cytoplasm. The enzyme catalyses carbamoyl phosphate + L-ornithine = L-citrulline + phosphate + H(+). It participates in amino-acid biosynthesis; L-arginine biosynthesis; L-arginine from L-ornithine and carbamoyl phosphate: step 1/3. Reversibly catalyzes the transfer of the carbamoyl group from carbamoyl phosphate (CP) to the N(epsilon) atom of ornithine (ORN) to produce L-citrulline. The chain is Ornithine carbamoyltransferase from Rhizobium johnstonii (strain DSM 114642 / LMG 32736 / 3841) (Rhizobium leguminosarum bv. viciae).